A 445-amino-acid polypeptide reads, in one-letter code: Phosphoglucosamine mutase (445 aa).

Residue Ser-102 is the Phosphoserine intermediate of the active site. Mg(2+)-binding residues include Ser-102, Asp-240, Asp-242, and Asp-244. Residue Ser-102 is modified to Phosphoserine.

The protein belongs to the phosphohexose mutase family. Mg(2+) serves as cofactor. Activated by phosphorylation.

The catalysed reaction is alpha-D-glucosamine 1-phosphate = D-glucosamine 6-phosphate. Its function is as follows. Catalyzes the conversion of glucosamine-6-phosphate to glucosamine-1-phosphate. The sequence is that of Phosphoglucosamine mutase from Mycolicibacterium gilvum (strain PYR-GCK) (Mycobacterium gilvum (strain PYR-GCK)).